A 315-amino-acid chain; its full sequence is Small ribosomal subunit biogenesis GTPase RsgA (315 aa).

A CP-type G domain is found at 79–243 (LSKESHILGA…LIDTPGIKGF (165 aa)). GTP-binding positions include 128 to 131 (NKID) and 182 to 190 (GHSGVGKSS). C267, C272, H274, and C280 together coordinate Zn(2+).

Belongs to the TRAFAC class YlqF/YawG GTPase family. RsgA subfamily. In terms of assembly, monomer. Associates with 30S ribosomal subunit, binds 16S rRNA. Requires Zn(2+) as cofactor.

It is found in the cytoplasm. One of several proteins that assist in the late maturation steps of the functional core of the 30S ribosomal subunit. Helps release RbfA from mature subunits. May play a role in the assembly of ribosomal proteins into the subunit. Circularly permuted GTPase that catalyzes slow GTP hydrolysis, GTPase activity is stimulated by the 30S ribosomal subunit. The protein is Small ribosomal subunit biogenesis GTPase RsgA of Porphyromonas gingivalis (strain ATCC 33277 / DSM 20709 / CIP 103683 / JCM 12257 / NCTC 11834 / 2561).